The primary structure comprises 138 residues: Phospholipase A2 EC1 (138 aa).

An N-terminal signal peptide occupies residues 1-16 (MRTLWIVAVWLMSVEG). 7 disulfides stabilise this stretch: Cys-42/Cys-131, Cys-44/Cys-60, Cys-59/Cys-111, Cys-65/Cys-138, Cys-66/Cys-104, Cys-73/Cys-97, and Cys-91/Cys-102. Ca(2+)-binding residues include Tyr-43, Gly-45, and Gly-47. Residue His-63 is part of the active site. Ca(2+) is bound at residue Asp-64. The active site involves Asp-105.

This sequence belongs to the phospholipase A2 family. Group II subfamily. The cofactor is Ca(2+).

It localises to the secreted. It catalyses the reaction a 1,2-diacyl-sn-glycero-3-phosphocholine + H2O = a 1-acyl-sn-glycero-3-phosphocholine + a fatty acid + H(+). The protein is Phospholipase A2 EC1 of Echis coloratus (Carpet viper).